Consider the following 382-residue polypeptide: Succinate--CoA ligase [ADP-forming] subunit beta (382 aa).

An ATP-grasp domain is found at 9–240; the sequence is KELLKKYGLP…ITQIDPLEVE (232 aa). The ATP site is built by K46, E98, T101, and E106. Residues N195 and D209 each coordinate Mg(2+). Substrate contacts are provided by residues N260 and 317 to 319; that span reads GIL.

Belongs to the succinate/malate CoA ligase beta subunit family. Heterotetramer of two alpha and two beta subunits. Mg(2+) serves as cofactor.

The catalysed reaction is succinate + ATP + CoA = succinyl-CoA + ADP + phosphate. It catalyses the reaction GTP + succinate + CoA = succinyl-CoA + GDP + phosphate. It functions in the pathway carbohydrate metabolism; tricarboxylic acid cycle; succinate from succinyl-CoA (ligase route): step 1/1. Succinyl-CoA synthetase functions in the citric acid cycle (TCA), coupling the hydrolysis of succinyl-CoA to the synthesis of either ATP or GTP and thus represents the only step of substrate-level phosphorylation in the TCA. The beta subunit provides nucleotide specificity of the enzyme and binds the substrate succinate, while the binding sites for coenzyme A and phosphate are found in the alpha subunit. In Hydrogenobaculum sp. (strain Y04AAS1), this protein is Succinate--CoA ligase [ADP-forming] subunit beta.